We begin with the raw amino-acid sequence, 178 residues long: Anthranilate synthase component 2 (178 aa).

Residues 1–178 form the Glutamine amidotransferase type-1 domain; sequence MIVVVDCKDS…RNFVEMCHDG (178 aa). 49-51 contributes to the L-glutamine binding site; that stretch reads GPG. Cysteine 71 serves as the catalytic Nucleophile; for GATase activity. L-glutamine-binding positions include glutamine 75 and 120 to 121; that span reads SL. Residues histidine 155 and glutamate 157 each act as for GATase activity in the active site.

In terms of assembly, heterotetramer consisting of two non-identical subunits: a beta subunit (TrpG) and a large alpha subunit (TrpE).

It carries out the reaction chorismate + L-glutamine = anthranilate + pyruvate + L-glutamate + H(+). It functions in the pathway amino-acid biosynthesis; L-tryptophan biosynthesis; L-tryptophan from chorismate: step 1/5. Its function is as follows. Part of a heterotetrameric complex that catalyzes the two-step biosynthesis of anthranilate, an intermediate in the biosynthesis of L-tryptophan. In the first step, the glutamine-binding beta subunit (TrpG) of anthranilate synthase (AS) provides the glutamine amidotransferase activity which generates ammonia as a substrate that, along with chorismate, is used in the second step, catalyzed by the large alpha subunit of AS (TrpE) to produce anthranilate. In the absence of TrpG, TrpE can synthesize anthranilate directly from chorismate and high concentrations of ammonia. This chain is Anthranilate synthase component 2 (trpG), found in Archaeoglobus fulgidus (strain ATCC 49558 / DSM 4304 / JCM 9628 / NBRC 100126 / VC-16).